Here is a 396-residue protein sequence, read N- to C-terminus: Phosphoglycerate kinase (396 aa).

Substrate-binding positions include 21–23, R36, 59–62, R118, and R151; these read DLN and HFGR. ATP contacts are provided by residues K201, E323, and 353 to 356; that span reads GGDT.

The protein belongs to the phosphoglycerate kinase family. In terms of assembly, monomer.

The protein resides in the cytoplasm. It carries out the reaction (2R)-3-phosphoglycerate + ATP = (2R)-3-phospho-glyceroyl phosphate + ADP. It functions in the pathway carbohydrate degradation; glycolysis; pyruvate from D-glyceraldehyde 3-phosphate: step 2/5. The chain is Phosphoglycerate kinase from Rhodospirillum centenum (strain ATCC 51521 / SW).